We begin with the raw amino-acid sequence, 362 residues long: Ribosomal RNA large subunit methyltransferase F (362 aa).

Basic residues predominate over residues 1-28 (MNTPLKPKHGQKTNRKPKANKPVVKKQQ). The segment at 1–40 (MNTPLKPKHGQKTNRKPKANKPVVKKQQTKQPPTHKVQGE) is disordered.

Belongs to the methyltransferase superfamily. METTL16/RlmF family.

The protein localises to the cytoplasm. It catalyses the reaction adenosine(1618) in 23S rRNA + S-adenosyl-L-methionine = N(6)-methyladenosine(1618) in 23S rRNA + S-adenosyl-L-homocysteine + H(+). Specifically methylates the adenine in position 1618 of 23S rRNA. This chain is Ribosomal RNA large subunit methyltransferase F, found in Vibrio cholerae serotype O1 (strain M66-2).